A 181-amino-acid polypeptide reads, in one-letter code: MRVVLLGPPGAGKGTQAQKLSEKLGIPQISTGELFRSNIENGTKLGLEAKRYLDAGDLVPAELTNQLVDDRLSEPDAANGFILDGFPRSLQQAKALHEMLERRGTDIDAVLEFRVSQDELLARLKARGRADDTDEVILNRMKVYRDETAPLLDYYRDQLKTVDAVGTLDEVFARALCALGK.

An ATP-binding site is contributed by 10–15 (GAGKGT). The interval 30–59 (STGELFRSNIENGTKLGLEAKRYLDAGDLV) is NMP. AMP-binding positions include Thr31, Arg36, 57-59 (DLV), 85-88 (GFPR), and Gln92. The LID stretch occupies residues 126–132 (ARGRADD). Arg127 lines the ATP pocket. Residues Arg129 and Arg140 each coordinate AMP. Gly166 is an ATP binding site.

The protein belongs to the adenylate kinase family. As to quaternary structure, monomer.

The protein resides in the cytoplasm. It catalyses the reaction AMP + ATP = 2 ADP. It functions in the pathway purine metabolism; AMP biosynthesis via salvage pathway; AMP from ADP: step 1/1. In terms of biological role, catalyzes the reversible transfer of the terminal phosphate group between ATP and AMP. Plays an important role in cellular energy homeostasis and in adenine nucleotide metabolism. The sequence is that of Adenylate kinase from Mycolicibacterium paratuberculosis (strain ATCC BAA-968 / K-10) (Mycobacterium paratuberculosis).